The chain runs to 267 residues: L-aspartate dehydrogenase 2 (267 aa).

NAD(+)-binding residues include Ala123 and Asn189. His219 is an active-site residue.

The protein belongs to the L-aspartate dehydrogenase family.

It carries out the reaction L-aspartate + NADP(+) + H2O = oxaloacetate + NH4(+) + NADPH + H(+). The enzyme catalyses L-aspartate + NAD(+) + H2O = oxaloacetate + NH4(+) + NADH + H(+). Its pathway is cofactor biosynthesis; NAD(+) biosynthesis; iminoaspartate from L-aspartate (dehydrogenase route): step 1/1. In terms of biological role, specifically catalyzes the NAD or NADP-dependent dehydrogenation of L-aspartate to iminoaspartate. The protein is L-aspartate dehydrogenase 2 of Bordetella bronchiseptica (strain ATCC BAA-588 / NCTC 13252 / RB50) (Alcaligenes bronchisepticus).